The following is a 397-amino-acid chain: Odorant receptor 2a (397 aa).

The Cytoplasmic segment spans residues 1–38; the sequence is MEKQEDFKLNTHSAVYYHWRVWELTGLMRPPGVSSLLY. A helical membrane pass occupies residues 39 to 59; it reads VVYSITVNLVVTVLFPLSLLA. Residues 60–72 lie on the Extracellular side of the membrane; the sequence is RLLFTTNMAGLCE. Residues 73–92 form a helical membrane-spanning segment; the sequence is NLTITITDIVANLKFANVYM. The Cytoplasmic portion of the chain corresponds to 93 to 131; the sequence is VRKQLHEIRSLLRLMDARARLVGDPEEISALRKEVNIAQ. The chain crosses the membrane as a helical span at residues 132 to 150; it reads GTFRTFASIFVFGTTLSCV. Residues 151–176 lie on the Extracellular side of the membrane; that stretch reads RVVVRPDRELLYPAWFGVDWMHSTRN. The helical transmembrane segment at 177 to 197 threads the bilayer; it reads YVLINIYQLFGLIVQAIQNCA. Residues 198–272 are Cytoplasmic-facing; it reads SDSYPPAFLC…IIQRVLSVPC (75 aa). Residues 273 to 293 traverse the membrane as a helical segment; it reads MAQFVCSAAVQCTVAMHFLYV. Residues 294–301 are Extracellular-facing; the sequence is ADDHDHTA. The helical transmembrane segment at 302-322 threads the bilayer; the sequence is MIISIVFFSAVTLEVFVICYF. Residues 323–363 are Cytoplasmic-facing; sequence GDRMRTQSEALCDAFYDCNWIEQLPKFKRELLFTLARTQRP. A helical membrane pass occupies residues 364 to 383; it reads SLIYAGNYIALSLETFEQVM. Residues 384 to 397 lie on the Extracellular side of the membrane; the sequence is RFTYSVFTLLLRAK.

It belongs to the insect chemoreceptor superfamily. Heteromeric odorant receptor channel (TC 1.A.69) family. Or2a subfamily. As to quaternary structure, interacts with Orco. Complexes exist early in the endomembrane system in olfactory sensory neurons (OSNs), coupling these complexes to the conserved ciliary trafficking pathway. In terms of tissue distribution, expressed in 20 sensory neurons on the distal edge of the antenna.

It is found in the cell membrane. In terms of biological role, odorant receptor which mediates acceptance or avoidance behavior, depending on its substrates. The odorant receptor repertoire encodes a large collection of odor stimuli that vary widely in identity, intensity, and duration. May form a complex with Orco to form odorant-sensing units, providing sensitive and prolonged odorant signaling and calcium permeability. This is Odorant receptor 2a (Or2a) from Drosophila melanogaster (Fruit fly).